Reading from the N-terminus, the 191-residue chain is Cdc42 homolog (191 aa).

10–17 is a GTP binding site; it reads GDGAVGKT. The Effector region signature appears at 32-40; the sequence is YVPTVFDNY. Residues 57-61 and 115-118 each bind GTP; these read DTAGQ and TQID. Cysteine methyl ester is present on C188. The S-geranylgeranyl cysteine moiety is linked to residue C188. Residues 189–191 constitute a propeptide, removed in mature form; the sequence is KFL.

Belongs to the small GTPase superfamily. Rho family. CDC42 subfamily.

The protein resides in the cell junction. It is found in the adherens junction. The protein localises to the cell membrane. It carries out the reaction GTP + H2O = GDP + phosphate + H(+). Its function is as follows. Regulates mbt kinase activity and is also required to recruit mbt to adherens junctions. Together with mbt, regulates photoreceptor cell morphogenesis. The protein is Cdc42 homolog of Drosophila pseudoobscura pseudoobscura (Fruit fly).